The sequence spans 300 residues: Phospholipase A1 (300 aa).

A disulfide bond links cysteine 4 and cysteine 87. Catalysis depends on serine 137, which acts as the Nucleophile. Catalysis depends on aspartate 165, which acts as the Charge relay system. Intrachain disulfides connect cysteine 176–cysteine 181 and cysteine 218–cysteine 227. The Charge relay system role is filled by histidine 229. 3 disulfide bridges follow: cysteine 244–cysteine 268, cysteine 245–cysteine 293, and cysteine 261–cysteine 266.

This sequence belongs to the AB hydrolase superfamily. Lipase family. Expressed by the venom gland.

It is found in the secreted. It catalyses the reaction a 1,2-diacyl-sn-glycero-3-phosphocholine + H2O = a 2-acyl-sn-glycero-3-phosphocholine + a fatty acid + H(+). With respect to regulation, local inflammatory effects are inhibited by antiserotonin drugs (cyproheptadine and methysergide), indomethacin, betamethasone, and antihistamine (chlorpheniramine). Functionally, catalyzes the hydrolysis of phosphatidylcholine with phospholipase A1 activity. Shows potent hemolytic activity that is responsible for its lethal effect. May act as an allergen. In vivo, induces local inflammatory effects. The chain is Phospholipase A1 from Vespa basalis (Hornet).